The following is a 538-amino-acid chain: Inositol-3-phosphate synthase (538 aa).

26 residues coordinate NAD(+): Gly-74, Gly-75, Asn-76, Asn-77, Asp-150, Ser-186, Val-187, Gln-197, Asp-198, Arg-200, Thr-247, Ala-248, Asn-249, Thr-250, Gly-298, Ser-299, Asp-323, Ser-326, Asn-357, Asn-358, Asp-359, Lys-372, Gly-412, Asp-413, Asp-441, and Ser-442.

The protein belongs to the myo-inositol 1-phosphate synthase family. In terms of assembly, homotetramer. Requires NAD(+) as cofactor.

It localises to the cytoplasm. The catalysed reaction is D-glucose 6-phosphate = 1D-myo-inositol 3-phosphate. Its pathway is polyol metabolism; myo-inositol biosynthesis; myo-inositol from D-glucose 6-phosphate: step 1/2. In terms of biological role, key enzyme in myo-inositol biosynthesis pathway that catalyzes the conversion of glucose 6-phosphate to 1-myo-inositol 1-phosphate in a NAD-dependent manner. Rate-limiting enzyme in the synthesis of all inositol-containing compounds. The chain is Inositol-3-phosphate synthase (INO1) from Candida glabrata (strain ATCC 2001 / BCRC 20586 / JCM 3761 / NBRC 0622 / NRRL Y-65 / CBS 138) (Yeast).